The following is a 410-amino-acid chain: LL-diaminopimelate aminotransferase (410 aa).

Residues tyrosine 15 and glycine 42 each coordinate substrate. Residues tyrosine 72, 108-109 (SK), tyrosine 132, asparagine 187, tyrosine 218, and 246-248 (SFS) each bind pyridoxal 5'-phosphate. Substrate is bound by residues lysine 109, tyrosine 132, and asparagine 187. Lysine 249 carries the N6-(pyridoxal phosphate)lysine modification. Pyridoxal 5'-phosphate contacts are provided by arginine 257 and asparagine 292. Substrate is bound by residues asparagine 292 and arginine 388.

Belongs to the class-I pyridoxal-phosphate-dependent aminotransferase family. LL-diaminopimelate aminotransferase subfamily. As to quaternary structure, homodimer. Pyridoxal 5'-phosphate serves as cofactor.

The catalysed reaction is (2S,6S)-2,6-diaminopimelate + 2-oxoglutarate = (S)-2,3,4,5-tetrahydrodipicolinate + L-glutamate + H2O + H(+). Its pathway is amino-acid biosynthesis; L-lysine biosynthesis via DAP pathway; LL-2,6-diaminopimelate from (S)-tetrahydrodipicolinate (aminotransferase route): step 1/1. Its function is as follows. Involved in the synthesis of meso-diaminopimelate (m-DAP or DL-DAP), required for both lysine and peptidoglycan biosynthesis. Catalyzes the direct conversion of tetrahydrodipicolinate to LL-diaminopimelate. The sequence is that of LL-diaminopimelate aminotransferase from Syntrophotalea carbinolica (strain DSM 2380 / NBRC 103641 / GraBd1) (Pelobacter carbinolicus).